Consider the following 139-residue polypeptide: Large ribosomal subunit protein uL16 (139 aa).

This sequence belongs to the universal ribosomal protein uL16 family. In terms of assembly, part of the 50S ribosomal subunit.

Functionally, binds 23S rRNA and is also seen to make contacts with the A and possibly P site tRNAs. This Synechocystis sp. (strain ATCC 27184 / PCC 6803 / Kazusa) protein is Large ribosomal subunit protein uL16.